The primary structure comprises 1515 residues: Homeobox protein cut-like 1 (1515 aa).

Residues 56-361 are a coiled coil; the sequence is LLKSFQGEID…VKKELNTLKS (306 aa). Over residues 393–405 the composition is skewed to polar residues; that stretch reads ENATLRISNSDLS. 4 disordered regions span residues 393–453, 509–546, 644–666, and 680–702; these read ENAT…SPAG, PYST…ISEG, PKRR…TGSD, and LQVQ…NSDD. Residues 422-432 show a composition bias toward pro residues; the sequence is GPLPASPPPQL. Phosphoserine is present on Ser427. Residues 436-447 are compositionally biased toward polar residues; sequence TGEQVSNTNGTH. The span at 514–544 shows a compositional bias: low complexity; that stretch reads SISSPSPLQQSPDVNGMAPSPSQSESAGSIS. The CUT 1 DNA-binding region spans 540–627; that stretch reads AGSISEGEEI…ILALRSIQGR (88 aa). Ser761 carries the post-translational modification Phosphoserine. Disordered stretches follow at residues 769-871 and 884-923; these read PETS…SASA and YSQS…PSVP. Glycyl lysine isopeptide (Lys-Gly) (interchain with G-Cter in SUMO2) cross-links involve residues Lys783, Lys809, and Lys840. Positions 828–852 are enriched in basic and acidic residues; it reads PERRNLTSSEETKADETTASGKERA. Polar residues-rich tracts occupy residues 853-868 and 884-906; these read GSSQ…QGPS and YSQS…NSPL. Ser904 bears the Phosphoserine mark. The CUT 2 DNA-binding region spans 929 to 1016; the sequence is QYEVYMYQEV…QGVLPVQGQQ (88 aa). The span at 1032–1044 shows a compositional bias: polar residues; the sequence is QQGCVSSESTPKT. Positions 1032-1105 are disordered; the sequence is QQGCVSSEST…QPTTPLPLSG (74 aa). Residues 1045 to 1061 are compositionally biased toward low complexity; sequence SASCSPAPESPMSSSES. A phosphoserine mark is found at Ser1054 and Ser1064. Residues 1112-1199 constitute a DNA-binding region (CUT 3); that stretch reads QELVAMSPEL…VEKLMDMKRM (88 aa). Residues 1207–1242 form a disordered region; that stretch reads RRHSSVSDSQPCEPPSVGIDYSQGASPQPQHQLKKP. The segment at residues 1239–1298 is a DNA-binding region (homeobox); the sequence is LKKPRVVLAPEEKEALKRAYQQKPYPSPKTIEELATQLNLKTSTVINWFHNYRSRIRREL. Phosphoserine is present on Ser1265. Lys1279 participates in a covalent cross-link: Glycyl lysine isopeptide (Lys-Gly) (interchain with G-Cter in SUMO2). The disordered stretch occupies residues 1307–1488; the sequence is SQGQAGASDS…AGARDNPVRK (182 aa). A compositionally biased stretch (low complexity) spans 1313 to 1328; that stretch reads ASDSPSARSSRAAPSS. Positions 1331–1343 are enriched in acidic residues; the sequence is DSCDGVEATDAEE. Ser1332 is subject to Phosphoserine. Residues 1365 to 1378 are compositionally biased toward basic and acidic residues; sequence ADREEATQPAEKAK. Low complexity predominate over residues 1406–1468; that stretch reads ADAPAPVPSL…ANAPARRPSS (63 aa). Residues Ser1468, Ser1496, and Ser1506 each carry the phosphoserine modification.

It belongs to the CUT homeobox family. In terms of assembly, interacts with BANP. Interacts with SATB1 (via DNA-binding domains); the interaction inhibits the attachment of both proteins to DNA. In terms of processing, phosphorylated by PKA. As cells progress into S phase, a fraction of CUX1 molecules is proteolytically processed into N-terminally truncated proteins of 110 kDa by CTSL. Cell cycle-dependent processing of CUX1 serves to generate a CDP/Cux p110 with distinct DNA binding and transcriptional properties. In terms of tissue distribution, testis-specific where it is expressed in germ cells.

It is found in the nucleus. Transcription factor involved in the control of neuronal differentiation in the brain. Regulates dendrite development and branching, and dendritic spine formation in cortical layers II-III. Also involved in the control of synaptogenesis. In addition, it has probably a broad role in mammalian development as a repressor of developmentally regulated gene expression. May act by preventing binding of positively-activing CCAAT factors to promoters. Component of nf-munr repressor; binds to the matrix attachment regions (MARs) (5' and 3') of the immunoglobulin heavy chain enhancer. Represses T-cell receptor (TCR) beta enhancer function by binding to MARbeta, an ATC-rich DNA sequence located upstream of the TCR beta enhancer. Binds to the TH enhancer; may require the basic helix-loop-helix protein TCF4 as a coactivator. Functionally, plays a role in cell cycle progression, in particular at the G1/S transition. As cells progress into S phase, a fraction of CUX1 molecules is proteolytically processed into N-terminally truncated proteins of 110 kDa. While CUX1 only transiently binds to DNA and carries the CCAAT-displacement activity, CDP/Cux p110 makes a stable interaction with DNA and stimulates expression of genes such as POLA1. This chain is Homeobox protein cut-like 1, found in Mus musculus (Mouse).